Consider the following 362-residue polypeptide: Apelin receptor A (362 aa).

The Extracellular portion of the chain corresponds to 1–34 (MEPTSEYTETYDYYDTGYNDSGCDYSEWEPSYSL). The N-linked (GlcNAc...) asparagine glycan is linked to Asn-19. 2 disulfides stabilise this stretch: Cys-23/Cys-286 and Cys-105/Cys-184. The helical transmembrane segment at 35–55 (IPVLYMLIFILGLSGNGVVIF) threads the bilayer. The Cytoplasmic segment spans residues 56 to 73 (TVWRAKSKRRAADVYIGN). Residues 74-94 (LALADLTFVITLPLWAVYTAL) form a helical membrane-spanning segment. Residues 95 to 106 (GYHWPFGVALCK) are Extracellular-facing. The helical transmembrane segment at 107-127 (ISSYVVLVNMYASVFCLTCLS) threads the bilayer. The Cytoplasmic segment spans residues 128–149 (FDRYLAIVHSLSSGRLRSRATM). The helical transmembrane segment at 150–170 (LASLGAIWFLSCLLAVPTLLF) threads the bilayer. The Extracellular portion of the chain corresponds to 171-211 (RTTVDDTGSNRTTCAMDFSLVTLNQDHESLWIAGLSLSSSA). An N-linked (GlcNAc...) asparagine glycan is attached at Asn-180. A helical transmembrane segment spans residues 212-232 (LGFLLPFLAMTVCYCFIGCTV). At 233 to 248 (TRHFSHLRKEDQKKRR) the chain is on the cytoplasmic side. A helical transmembrane segment spans residues 249–269 (LLKIITTLVVVFAFCWTPFHV). At 270–284 (LKSMDALSYLDLAPN) the chain is on the extracellular side. A helical transmembrane segment spans residues 285-305 (SCGFLHFLLLAHPYATCLAYV). The Cytoplasmic segment spans residues 306 to 362 (NSCLNPFLYAFFDLRFRSQCLCLLNLKKAMHGHMSSMSSTLSAQTQKSEVQSLATKV).

Belongs to the G-protein coupled receptor 1 family. As to expression, first expressed before epiboly in dorsal precursors. During epiboly, expressed in the enveloping layer, yolk syncytial layer and migrating mesendoderm. During segmentation stages, expressed in epithelial structures such as adaxial cells, border cells of the newly formed somites, developing lens, otic vesicles and venous vasculature.

It is found in the cell membrane. Its function is as follows. G protein-coupled receptor for peptide hormones apelin (apln) and apelin receptor early endogenous ligand (apela), that plays a role in the regulation of normal cardiovascular function and fluid homeostasis. When acting as apelin receptor, activates both G(i) protein pathway that inhibits adenylate cyclase activity, and the beta-arrestin pathway that promotes internalization of the receptor. Also functions as mechanoreceptor that is activated by pathological stimuli in a G-protein-independent fashion to induce beta-arrestin signaling, hence eliciting cardiac hypertrophy. However, the presence of apelin ligand blunts cardiac hypertrophic induction from APLNR/APJ on response to pathological stimuli. Plays a key role in early development such as gastrulation, blood vessels formation and heart morphogenesis by acting as a receptor for apela hormone, promoting endoderm and mesendoderm cell migration and regulating the migration of cells fated to become myocardial progenitors, respectively. Positively regulates angioblast migration toward the embryonic midline, i.e. the position of the future vessel formation, during vasculogenesis. May promote sinus venosus (SV)-derived endothelial cells migration into the developing heart to promote coronary blood vessel development. Required for cardiovascular development, particularly for intersomitic vein angiogenesis by acting as a receptor for apln hormone. Also plays a role in various processes in adults such as regulation of blood vessel formation, blood pressure, heart contractility, and heart failure. Acts redundantly with agtrl1b in heart development. This chain is Apelin receptor A (aplnra), found in Danio rerio (Zebrafish).